Here is a 993-residue protein sequence, read N- to C-terminus: Signal peptide, CUB and EGF-like domain-containing protein 3 (993 aa).

A signal peptide spans 1–20; sequence MGSGRVPGLCLLVLLVHARA. One can recognise an EGF-like 1; calcium-binding domain in the interval 29 to 69; it reads DVDECVEGTDNCHIDAICQNTPRSYKCICKSGYTGDGKHCK. Cystine bridges form between cysteine 33–cysteine 46, cysteine 40–cysteine 55, cysteine 57–cysteine 68, cysteine 74–cysteine 86, cysteine 82–cysteine 95, cysteine 97–cysteine 110, cysteine 116–cysteine 127, cysteine 123–cysteine 136, cysteine 161–cysteine 172, cysteine 168–cysteine 182, cysteine 184–cysteine 197, cysteine 201–cysteine 212, cysteine 208–cysteine 221, cysteine 223–cysteine 236, cysteine 240–cysteine 251, cysteine 247–cysteine 260, cysteine 262–cysteine 275, cysteine 281–cysteine 292, cysteine 288–cysteine 301, cysteine 303–cysteine 316, cysteine 322–cysteine 332, cysteine 328–cysteine 341, cysteine 343–cysteine 355, cysteine 361–cysteine 372, cysteine 368–cysteine 381, and cysteine 383–cysteine 397. The region spanning 70–111 is the EGF-like 2; calcium-binding domain; it reads DVDECEREDNAGCVHDCVNIPGNYRCTCYDGFHLAHDGHNCL. Residues 112 to 148 form the EGF-like 3; calcium-binding domain; that stretch reads DVDECAEGNGGCQQSCVNMMGSYECHCREGFFLSDNQ. EGF-like domains lie at 157-198, 199-237, and 238-276; these read EGMN…RDCK, LTCN…KTCI, and ETCA…KTCK. The EGF-like 7; calcium-binding domain occupies 277-317; sequence DIDECRLNNGGCDHICRNTVGSFECSCKKGYKLLINERNCQ. An EGF-like 8; calcium-binding domain is found at 318–356; it reads DIDECSFDRTCDHICVNTPGSFQCLCHRGYLLYGITHCG. The EGF-like 9; calcium-binding domain maps to 357–398; it reads DVDECSINRGGCRFGCINTPGSYQCTCPAGQGRLHWNGKDCT. N-linked (GlcNAc...) asparagine glycans are attached at residues asparagine 417, asparagine 464, asparagine 685, asparagine 756, and asparagine 785. Cystine bridges form between cysteine 804–cysteine 830 and cysteine 857–cysteine 878. One can recognise a CUB domain in the interval 804 to 916; that stretch reads CGGELGEFTG…RGFQIPYVTY (113 aa).

As to quaternary structure, forms homooligomers. Forms heterooligomers with SCUBE1 and SCUBE2. Interacts with TGFBR2 through the CUB domain; this interaction does not affect TGFB1-binding to TGFBR2. Interacts with BMP2, BMP4 and BMP7; the interaction is mediated by the CUB domain. Interacts with BMPR1A, BMPR1B and BMPR2; the interaction with BMPR1A and BMPR1B is BMP2- and BMP4-dependent. In terms of processing, N-glycosylated. Proteolytic cleavage produces a CUB-containing C-terminal fragment that retains the ability to bind to TGFBR2. This reaction is catalyzed in vitro by MMP2 and, to a lesser extent, by MMP9. In terms of tissue distribution, highly expressed in osteoblasts. In normal lung, mainly expressed in bronchial epithelial cells. Tends to be up-regulated in lung cancer cells.

It localises to the secreted. The protein resides in the cell surface. Is a positive regulator of the BMP signaling pathway, required for proper chondrogenesis, osteogenesis and skeletal development. It acts as a coreceptor for BMP ligands, particularly BMP2 and BMP4, facilitating their interactions with BMP type I receptors. It is required for ligand-induced recruitment of BMP receptors to lipid rafts. Binds to TGFBR2 and activates TGFB signaling. In lung cancer cells, could serve as an endogenous autocrine and paracrine ligand of TGFBR2, which could regulate TGFBR2 signaling and hence modulate epithelial-mesenchymal transition and cancer progression. This is Signal peptide, CUB and EGF-like domain-containing protein 3 from Homo sapiens (Human).